The sequence spans 316 residues: Serpentine receptor class delta-48 (316 aa).

The next 7 helical transmembrane spans lie at 8–28 (FFYITFFILVLPTQIFGIFVI), 42–62 (FLLCNLICQIISVATLCLLQL), 89–109 (LFYVLSQISTLMTYFLVFITI), 127–147 (VVIILMLLLPIFITMVAQIDL), 185–205 (FLLTVIIFGSVFLLPPAGFFI), 236–256 (TLQSFLPLVCICPIFACYFVV), and 269–289 (ILPVLVMLPTLFDPYIILYSV).

This sequence belongs to the nematode receptor-like protein srd family.

Its subcellular location is the membrane. This Caenorhabditis elegans protein is Serpentine receptor class delta-48 (srd-48).